A 102-amino-acid polypeptide reads, in one-letter code: uncharacterized protein (102 aa).

2 disordered regions span residues 1–21 (MKRM…GAGE) and 33–71 (GSGT…SACT). Topologically, residues 1–79 (MKRMIRSHGR…CTRTDHQKAD (79 aa)) are extracellular. A compositionally biased stretch (polar residues) spans 56–71 (SSGTRRGSANETSACT). Residue Asn-65 is glycosylated (N-linked (GlcNAc...) asparagine; by host). The chain crosses the membrane as a helical span at residues 80–97 (IGLWFMFLVFGLCSWLAM). The Cytoplasmic portion of the chain corresponds to 98-102 (RYRAQ).

It belongs to the HHV-5 UL15A protein family.

Its subcellular location is the host membrane. This is an uncharacterized protein from Human cytomegalovirus (strain Merlin) (HHV-5).